The chain runs to 63 residues: Small integral membrane protein 43 (63 aa).

2 important for interaction with SLC2A1 and SLC2A3 regions span residues 7–29 and 51–57; these read LLLY…FVVI and HREPWGF. Residues 9-29 form a helical membrane-spanning segment; sequence LYLALFFFLLFLLFLLLFVVI.

In terms of assembly, interacts with glucose transporters SLC2A1/GLUT1 and SLC2A3/GLUT3; the interactions may promote SLC2A1- and SLC2A3-mediated glucose transport to meet the energy needs of mesendoderm differentiation. In terms of tissue distribution, accumulates in the posterior primitive streak of mid-gastrulation embryos at 7.0 dpc. In the adult, highly abundant and enriched in the brain compared to other organs.

The protein localises to the cell membrane. Functionally, required for mesendoderm differentiation. Interacts with glucose transporters and promotes glucose uptake. Probably augments the glucose uptake capacity of glucose transporter proteins to meet the energy needs of mesendoderm differentiation. This Mus musculus (Mouse) protein is Small integral membrane protein 43.